The primary structure comprises 566 residues: Oxygen-dependent choline dehydrogenase (566 aa).

7–36 (DYIICGAGSAGNVLATRLTEDPDVTVLLLE) provides a ligand contact to FAD. The tract at residues 180–202 (NGYQQEGFGPMDRTVTPKGRRAS) is disordered. Histidine 474 acts as the Proton acceptor in catalysis.

Belongs to the GMC oxidoreductase family. FAD serves as cofactor.

The enzyme catalyses choline + A = betaine aldehyde + AH2. It carries out the reaction betaine aldehyde + NAD(+) + H2O = glycine betaine + NADH + 2 H(+). It participates in amine and polyamine biosynthesis; betaine biosynthesis via choline pathway; betaine aldehyde from choline (cytochrome c reductase route): step 1/1. Its function is as follows. Involved in the biosynthesis of the osmoprotectant glycine betaine. Catalyzes the oxidation of choline to betaine aldehyde and betaine aldehyde to glycine betaine at the same rate. This Burkholderia lata (strain ATCC 17760 / DSM 23089 / LMG 22485 / NCIMB 9086 / R18194 / 383) protein is Oxygen-dependent choline dehydrogenase.